A 431-amino-acid polypeptide reads, in one-letter code: Protein CLT2, chloroplastic (431 aa).

The N-terminal 79 residues, Met1–Gly79, are a transit peptide targeting the chloroplast. Transmembrane regions (helical) follow at residues Val99–Met119, Tyr122–Leu142, Phe163–Met183, Val188–Leu208, Phe212–Ser232, Ile244–Ile264, Ile284–Pro304, Ile343–Val363, Ile365–Ile385, and Phe403–Pro423.

It belongs to the CRT-like transporter family.

It is found in the plastid. The protein resides in the chloroplast membrane. Involved in thiol transport from the plastid to the cytosol. Transports probably both glutathione (GSH) and its precursor, gamma-glutamylcysteine (gamma-EC). The sequence is that of Protein CLT2, chloroplastic from Arabidopsis thaliana (Mouse-ear cress).